The chain runs to 171 residues: Regulator of ribonuclease activity A (171 aa).

Belongs to the RraA family. In terms of assembly, homotrimer. Binds to both RNA-binding sites in the C-terminal region of Rne and to RhlB.

Its subcellular location is the cytoplasm. Its function is as follows. Globally modulates RNA abundance by binding to RNase E (Rne) and regulating its endonucleolytic activity. Can modulate Rne action in a substrate-dependent manner by altering the composition of the degradosome. Modulates RNA-binding and helicase activities of the degradosome. This is Regulator of ribonuclease activity A from Vibrio cholerae serotype O1 (strain ATCC 39315 / El Tor Inaba N16961).